An 818-amino-acid polypeptide reads, in one-letter code: FAD-dependent monooxygenase anuJ (818 aa).

5 residues coordinate FAD: Glu-46, Ala-60, Arg-122, Asp-329, and Gly-342. The next 3 membrane-spanning stretches (helical) occupy residues 471-491 (VLWALPLLGMAVAGLLTMFSV), 539-559 (FFYQPFSFFADYGVWYGIMLV), and 571-591 (LSFALLWGMLNMWGIAIFVPI). N-linked (GlcNAc...) asparagine glycosylation is present at Asn-614. The next 2 membrane-spanning stretches (helical) occupy residues 621–641 (ILPVLLATHYATFMDAYLSPV) and 647–667 (AAGFLWELFPVWLSLAQAGLA). Asn-683 carries N-linked (GlcNAc...) asparagine glycosylation. The next 2 helical transmembrane spans lie at 743-763 (WDQVFFAIPNLFWIILLFADL) and 778-798 (FSALGLIIAGGNGTMLGLMWL).

Belongs to the paxM FAD-dependent monooxygenase family.

The protein localises to the membrane. Its function is as follows. Highly reducing polyketide synthase; part of the gene cluster that mediates the biosynthesis of annullatin D, an alkylated aromatic polyketide with a fused dihydrobenzofuran lactone ring system that exhibits potent agonistic activities toward the cannabinoid receptors. AnuJ does not seem to play a role within the pathway. The annullatin backbone 2-hydroxymethyl-3-pentylphenol is assembled from one acetyl-CoA starter unit and 5 malonyl-CoA elongation units by cooperation of the highly reducing polyketide synthase anuA, the short-chain dehydrogenase anuB and the oxidoreductase anuC, before being hydroxylated at the C-5 alkyl chain by the cytochrome P450 monooxygenase anuE to form (8S)-annullatin E. The prenyltransferase anuH subsequently installs one isoprenyl group at the benzene ring to form (8S)-annullatin J. Enzymatic or nonenzymatic dihydro-benzofuran ring formation between the prenyl and the phenolic hydroxyl groups in (8S)-annullatin J results in two diastereomers (2S,9S)-annullatin H and compound 12. The intermediate (2S,9S)-annullatin H is then converted to (2S,9S)-annullatin D by the FAD-linked oxidoreductase anuG-catalyzed five-member lactone ring formation. The isomer 12 acts as a substrate for the short-chain dehydrogenase anuF and is oxidized to (2R)-annullatin F, which is subsequently acetylated by an acetyltransferase leading to (2R)-annullatin G formation. The remaining enzymes identified within the cluster, anuD, anuI and anuJ, seem not to be involved in annullatin biosynthesis. The protein is FAD-dependent monooxygenase anuJ of Penicillium roqueforti (strain FM164).